Consider the following 145-residue polypeptide: D-aminoacyl-tRNA deacylase (145 aa).

The short motif at Gly137–Pro138 is the Gly-cisPro motif, important for rejection of L-amino acids element.

The protein belongs to the DTD family. Homodimer.

The protein localises to the cytoplasm. It catalyses the reaction glycyl-tRNA(Ala) + H2O = tRNA(Ala) + glycine + H(+). The catalysed reaction is a D-aminoacyl-tRNA + H2O = a tRNA + a D-alpha-amino acid + H(+). In terms of biological role, an aminoacyl-tRNA editing enzyme that deacylates mischarged D-aminoacyl-tRNAs. Also deacylates mischarged glycyl-tRNA(Ala), protecting cells against glycine mischarging by AlaRS. Acts via tRNA-based rather than protein-based catalysis; rejects L-amino acids rather than detecting D-amino acids in the active site. By recycling D-aminoacyl-tRNA to D-amino acids and free tRNA molecules, this enzyme counteracts the toxicity associated with the formation of D-aminoacyl-tRNA entities in vivo and helps enforce protein L-homochirality. In Klebsiella pneumoniae subsp. pneumoniae (strain ATCC 700721 / MGH 78578), this protein is D-aminoacyl-tRNA deacylase.